Consider the following 225-residue polypeptide: Uridylate kinase (225 aa).

9–10 (GS) serves as a coordination point for ATP. Gly-46 lines the UMP pocket. Gly-47 and Arg-51 together coordinate ATP. Residues Asp-67 and 115–121 (THPAHTT) each bind UMP. ATP is bound by residues Thr-141, Asn-142, Tyr-147, and Asp-150.

Belongs to the UMP kinase family. In terms of assembly, homohexamer.

The protein resides in the cytoplasm. The catalysed reaction is UMP + ATP = UDP + ADP. It participates in pyrimidine metabolism; CTP biosynthesis via de novo pathway; UDP from UMP (UMPK route): step 1/1. Its activity is regulated as follows. Inhibited by UTP. Catalyzes the reversible phosphorylation of UMP to UDP. In Methanococcus maripaludis (strain DSM 14266 / JCM 13030 / NBRC 101832 / S2 / LL), this protein is Uridylate kinase.